An 89-amino-acid polypeptide reads, in one-letter code: Small ribosomal subunit protein uS15 (89 aa).

It belongs to the universal ribosomal protein uS15 family. In terms of assembly, part of the 30S ribosomal subunit. Forms a bridge to the 50S subunit in the 70S ribosome, contacting the 23S rRNA.

Functionally, one of the primary rRNA binding proteins, it binds directly to 16S rRNA where it helps nucleate assembly of the platform of the 30S subunit by binding and bridging several RNA helices of the 16S rRNA. In terms of biological role, forms an intersubunit bridge (bridge B4) with the 23S rRNA of the 50S subunit in the ribosome. The sequence is that of Small ribosomal subunit protein uS15 from Desulforudis audaxviator (strain MP104C).